The primary structure comprises 370 residues: A-type ATP synthase subunit C (370 aa).

The protein belongs to the V-ATPase V0D/AC39 subunit family. As to quaternary structure, has multiple subunits with at least A(3), B(3), C, D, E, F, H, I and proteolipid K(x).

Its subcellular location is the cell membrane. Functionally, component of the A-type ATP synthase that produces ATP from ADP in the presence of a proton gradient across the membrane. The polypeptide is A-type ATP synthase subunit C (Pyrococcus furiosus (strain ATCC 43587 / DSM 3638 / JCM 8422 / Vc1)).